The sequence spans 341 residues: NADH-quinone oxidoreductase subunit H (341 aa).

8 helical membrane-spanning segments follow: residues 38-58, 70-90, 115-135, 161-181, 187-207, 239-259, 275-295, and 314-334; these read PSVVGPFGLLQPFADAIKLLV, ILFIMAPMLTFILALIVWAVI, IGVLYVLAISSLGIYGIIVAG, MGLIVATVVITTGTLNLGEMV, MPFWIDLLMMPIGVVFFISLL, LFFLGEYANMILGSAMMTIFF, IPGLIWFVLKIVLLLFIFVWT, and VFLPISVLWVILISGVLLFTG.

It belongs to the complex I subunit 1 family. In terms of assembly, NDH-1 is composed of 14 different subunits. Subunits NuoA, H, J, K, L, M, N constitute the membrane sector of the complex.

It localises to the cell membrane. The enzyme catalyses a quinone + NADH + 5 H(+)(in) = a quinol + NAD(+) + 4 H(+)(out). In terms of biological role, NDH-1 shuttles electrons from NADH, via FMN and iron-sulfur (Fe-S) centers, to quinones in the respiratory chain. The immediate electron acceptor for the enzyme in this species is believed to be ubiquinone. Couples the redox reaction to proton translocation (for every two electrons transferred, four hydrogen ions are translocated across the cytoplasmic membrane), and thus conserves the redox energy in a proton gradient. This subunit may bind ubiquinone. In Wolbachia sp. subsp. Brugia malayi (strain TRS), this protein is NADH-quinone oxidoreductase subunit H.